The chain runs to 1179 residues: MIKIITGRQSDPLQTEIIGRAARNYLAQPGKDTFIIVPNHIKFNTEVAAIGKVAQLQGREETSVKNLHVLSFSRLAWFFFKKADLLMPESLDDAAATMILEQIIDKRRDELLLFKNSHANSGMIKQVYSTILQVHTGQLDLGNLLERAADPAVALDLDNETRDKLHDLDLIYQDFLEIVSEKHFATKDELNIQLNQLLASRPDLVSQASFYVTDFSHFSIQEKMTMQLLAAFASEMTFAFKTADGSVIEPAAGEYDYVVQKTIKDLTGYFSAHDFAWEREKIASPASPARDLNQAWQGQGQPDLNNLQLVKADSRYAEAYFVARTIYDEVALKGCQYRDFLVLAPNLQEYETYLAPILRQNQIPFFDDLQQQMKYHPLVLLLENLGKLLQQAGDTPALLSIMKTRLLIPDWYLEGDAEAGEAAYLRDIDQLENFALAHGIKYSLWQKPLKDFTKAQVIALDQEQYQKWLDRLDKLRDFFVSKISRLARQLKSEKDSMTAVKLFFDFLVKNGVSARLEAWRLKASESGDLQQAQQPEQCWNLLLSLLKDYLLVNPENFAWADFFKMLTAAFSQANFATIPASLDAVTLSEYGMVQTSGYKQVFIIGAANGSLPQINDQPNFLTTENLASLADFFDQDAYLEDSQQLRNLDQEYQFGNALALASDRVYISYPVINSNNDLLDPSIYYKRLLKLVNGREYRQRDLPDIAEKDRTEFARQLLLFLTSPRASLGYLAYAEENSAQSPLVAKLVELSRQYEEEKAEEIAEGMAYDNNPQDISEDLAERLYGKDLLSSVSQLESYYQNSFEYFLNYGLRLRPRAENELNAIQSGNYFHRTFELLLKEMQKKNIEIDKLSELDLELLLKQVRSEILQEPLYQQFLRDPFNEYLFKVFDKTTSKVAQSYRRKQQENKMRATYGELAFGPAEKLAGLVLPLKKFAGQRKISLRGKIDRVDLFNGDQHVLGQLIDYKSSDHSFNLARFASGVDLQMIAYLDVLEKNRDLLAGGRQFDLLGAFYQYVTRKLNSVNSSSTGALFDSKLQLKENLLGGEDKLKLSGVFVSEPAWYQEVDKALEKKATSSVYRGLKLNKSGGFGKKDNFFSQDEMRELLEYVEALIEDAASEILSGQIALNPFRQGNNTGLAFSDYKDIFYFDQQLPTNSYRDLPNLKKADLLALVEKRLRQRE.

This sequence belongs to the helicase family. AddB/RexB type 2 subfamily. In terms of assembly, heterodimer of AddA and RexB. Mg(2+) is required as a cofactor.

Functionally, the heterodimer acts as both an ATP-dependent DNA helicase and an ATP-dependent, dual-direction single-stranded exonuclease. Recognizes the chi site generating a DNA molecule suitable for the initiation of homologous recombination. This subunit has 5' -&gt; 3' nuclease activity but not helicase activity. The polypeptide is ATP-dependent helicase/deoxyribonuclease subunit B (Lactobacillus delbrueckii subsp. bulgaricus (strain ATCC 11842 / DSM 20081 / BCRC 10696 / JCM 1002 / NBRC 13953 / NCIMB 11778 / NCTC 12712 / WDCM 00102 / Lb 14)).